We begin with the raw amino-acid sequence, 61 residues long: Metallothionein-1C (61 aa).

The tract at residues 1-29 (MDPNCSCSTGSSCSCAGSCTCKACRCPSC) is beta. A divalent metal cation is bound by residues Cys5, Cys7, Cys13, Cys15, Cys19, Cys21, Cys24, Cys26, Cys29, Cys33, Cys34, Cys36, Cys37, Cys41, Cys44, Cys48, Cys50, Cys57, Cys59, and Cys60. The segment at 30-61 (KKSCCSCCPVGCAKCAQGCICKGASDKCSCCA) is alpha.

Belongs to the metallothionein superfamily. Type 1 family.

In terms of biological role, metallothioneins have a high content of cysteine residues that bind various heavy metals; these proteins are transcriptionally regulated by both heavy metals and glucocorticoids. The sequence is that of Metallothionein-1C (MT1C) from Ovis aries (Sheep).